The primary structure comprises 447 residues: Glutamate-1-semialdehyde 2,1-aminomutase (447 aa).

Lys272 carries the post-translational modification N6-(pyridoxal phosphate)lysine.

It belongs to the class-III pyridoxal-phosphate-dependent aminotransferase family. HemL subfamily. Homodimer. Pyridoxal 5'-phosphate is required as a cofactor.

It localises to the cytoplasm. The enzyme catalyses (S)-4-amino-5-oxopentanoate = 5-aminolevulinate. It participates in porphyrin-containing compound metabolism; protoporphyrin-IX biosynthesis; 5-aminolevulinate from L-glutamyl-tRNA(Glu): step 2/2. This is Glutamate-1-semialdehyde 2,1-aminomutase from Leifsonia xyli subsp. xyli (strain CTCB07).